The following is a 403-amino-acid chain: N-isopropylammelide isopropyl amidohydrolase (403 aa).

3 residues coordinate Zn(2+): histidine 60, histidine 62, and histidine 217. The active-site Proton donor/acceptor is the histidine 249. Aspartate 303 contacts Zn(2+).

Belongs to the metallo-dependent hydrolases superfamily. N-acyl-D-amino-acid deacylase family. In terms of assembly, homotetramer. Requires Zn(2+) as cofactor.

It is found in the cytoplasm. The enzyme catalyses N-isopropylammelide + H2O + H(+) = isopropylamine + cyanurate. It functions in the pathway xenobiotic degradation; atrazine degradation; cyanurate from atrazine: step 3/3. With respect to regulation, inhibited by N-ethylammeline, N-hydroxyethylammeline, N-isopropylammeline, ammeline and 2-amino-4hydroxy-1,3,5-s-triazine. In terms of biological role, transforms N-isopropylammelide to cyanuric acid and isopropylamine. This chain is N-isopropylammelide isopropyl amidohydrolase (atzC), found in Pseudomonas sp. (strain ADP).